Consider the following 141-residue polypeptide: HTH-type transcriptional repressor NsrR (141 aa).

The 128-residue stretch at 2–129 folds into the HTH rrf2-type domain; sequence QLTNFTDYGL…DNYTLADLVE (128 aa). Residues 28 to 51 constitute a DNA-binding region (H-T-H motif); sequence ISEVTDVYGVSRNHMVKIINQLSR. The [2Fe-2S] cluster site is built by cysteine 91, cysteine 96, and cysteine 102.

Requires [2Fe-2S] cluster as cofactor.

Nitric oxide-sensitive repressor of genes involved in protecting the cell against nitrosative stress. May require iron for activity. The sequence is that of HTH-type transcriptional repressor NsrR from Shigella boydii serotype 18 (strain CDC 3083-94 / BS512).